The primary structure comprises 567 residues: Urease subunit alpha (567 aa).

3 residues coordinate Ni(2+): His-134, His-136, and Lys-217. Lys-217 carries the post-translational modification N6-carboxylysine. His-219 is a substrate binding site. Residues His-246 and His-272 each coordinate Ni(2+). His-320 functions as the Proton donor in the catalytic mechanism. Asp-360 is a Ni(2+) binding site.

The protein belongs to the metallo-dependent hydrolases superfamily. Urease alpha subunit family. As to quaternary structure, heterotrimer of UreA (gamma), UreB (beta) and UreC (alpha) subunits. Three heterotrimers associate to form the active enzyme. The cofactor is Ni cation. Post-translationally, carboxylation allows a single lysine to coordinate two nickel ions.

It is found in the cytoplasm. The enzyme catalyses urea + 2 H2O + H(+) = hydrogencarbonate + 2 NH4(+). Its pathway is nitrogen metabolism; urea degradation; CO(2) and NH(3) from urea (urease route): step 1/1. In Pseudomonas putida (strain GB-1), this protein is Urease subunit alpha.